The chain runs to 173 residues: Placenta-specific protein 1 (173 aa).

A signal peptide spans 1-23; that stretch reads MNLRKFLGGTVLVAFMLFSYSEQ.

This sequence belongs to the PLAC1 family. In terms of tissue distribution, expressed in placenta.

The protein localises to the secreted. In terms of biological role, may play a role in placental development. The protein is Placenta-specific protein 1 of Mus musculus (Mouse).